A 543-amino-acid polypeptide reads, in one-letter code: Formate--tetrahydrofolate ligase (543 aa).

54–61 (TPAGEGKT) is an ATP binding site.

The protein belongs to the formate--tetrahydrofolate ligase family.

The enzyme catalyses (6S)-5,6,7,8-tetrahydrofolate + formate + ATP = (6R)-10-formyltetrahydrofolate + ADP + phosphate. It participates in one-carbon metabolism; tetrahydrofolate interconversion. The polypeptide is Formate--tetrahydrofolate ligase (Thermus thermophilus (strain ATCC BAA-163 / DSM 7039 / HB27)).